The chain runs to 154 residues: Transcriptional repressor NrdR (154 aa).

A zinc finger lies at 3–34 (CPFCRHPDSRVVDSRETDEGQAIRRRRSCPEC). Residues 46–136 (LAVVKRSGVT…VYRSFSSAED (91 aa)) form the ATP-cone domain.

The protein belongs to the NrdR family. Zn(2+) serves as cofactor.

In terms of biological role, negatively regulates transcription of bacterial ribonucleotide reductase nrd genes and operons by binding to NrdR-boxes. This is Transcriptional repressor NrdR from Mycolicibacterium vanbaalenii (strain DSM 7251 / JCM 13017 / BCRC 16820 / KCTC 9966 / NRRL B-24157 / PYR-1) (Mycobacterium vanbaalenii).